We begin with the raw amino-acid sequence, 367 residues long: UDP-N-acetylglucosamine--N-acetylmuramyl-(pentapeptide) pyrophosphoryl-undecaprenol N-acetylglucosamine transferase (367 aa).

Residues 10 to 12 (TGG), N124, S196, and Q300 each bind UDP-N-acetyl-alpha-D-glucosamine.

Belongs to the glycosyltransferase 28 family. MurG subfamily.

The protein resides in the cell membrane. It catalyses the reaction di-trans,octa-cis-undecaprenyl diphospho-N-acetyl-alpha-D-muramoyl-L-alanyl-D-glutamyl-meso-2,6-diaminopimeloyl-D-alanyl-D-alanine + UDP-N-acetyl-alpha-D-glucosamine = di-trans,octa-cis-undecaprenyl diphospho-[N-acetyl-alpha-D-glucosaminyl-(1-&gt;4)]-N-acetyl-alpha-D-muramoyl-L-alanyl-D-glutamyl-meso-2,6-diaminopimeloyl-D-alanyl-D-alanine + UDP + H(+). The protein operates within cell wall biogenesis; peptidoglycan biosynthesis. Functionally, cell wall formation. Catalyzes the transfer of a GlcNAc subunit on undecaprenyl-pyrophosphoryl-MurNAc-pentapeptide (lipid intermediate I) to form undecaprenyl-pyrophosphoryl-MurNAc-(pentapeptide)GlcNAc (lipid intermediate II). This is UDP-N-acetylglucosamine--N-acetylmuramyl-(pentapeptide) pyrophosphoryl-undecaprenol N-acetylglucosamine transferase from Natranaerobius thermophilus (strain ATCC BAA-1301 / DSM 18059 / JW/NM-WN-LF).